The following is a 445-amino-acid chain: Phosphoglucosamine mutase (445 aa).

S102 serves as the catalytic Phosphoserine intermediate. Mg(2+)-binding residues include S102, D241, D243, and D245. S102 carries the phosphoserine modification.

Belongs to the phosphohexose mutase family. Requires Mg(2+) as cofactor. In terms of processing, activated by phosphorylation.

It carries out the reaction alpha-D-glucosamine 1-phosphate = D-glucosamine 6-phosphate. Functionally, catalyzes the conversion of glucosamine-6-phosphate to glucosamine-1-phosphate. The chain is Phosphoglucosamine mutase from Escherichia coli (strain 55989 / EAEC).